Reading from the N-terminus, the 495-residue chain is Phytochrome A type 5 (495 aa).

The segment covering M1 to R21 has biased composition (low complexity). Residues M1–A24 form a disordered region. Positions S217 to F402 constitute a GAF domain. C322 contributes to the phytochromobilin binding site.

Belongs to the phytochrome family. Homodimer. Contains one covalently linked phytochromobilin chromophore.

Regulatory photoreceptor which exists in two forms that are reversibly interconvertible by light: the Pr form that absorbs maximally in the red region of the spectrum and the Pfr form that absorbs maximally in the far-red region. Photoconversion of Pr to Pfr induces an array of morphogenic responses, whereas reconversion of Pfr to Pr cancels the induction of those responses. Pfr controls the expression of a number of nuclear genes including those encoding the small subunit of ribulose-bisphosphate carboxylase, chlorophyll A/B binding protein, protochlorophyllide reductase, rRNA, etc. It also controls the expression of its own gene(s) in a negative feedback fashion. This is Phytochrome A type 5 (PHYA5) from Avena sativa (Oat).